The following is a 316-amino-acid chain: Transaldolase (316 aa).

Lysine 132 serves as the catalytic Schiff-base intermediate with substrate.

The protein belongs to the transaldolase family. Type 1 subfamily. Homodimer.

The protein resides in the cytoplasm. It carries out the reaction D-sedoheptulose 7-phosphate + D-glyceraldehyde 3-phosphate = D-erythrose 4-phosphate + beta-D-fructose 6-phosphate. It participates in carbohydrate degradation; pentose phosphate pathway; D-glyceraldehyde 3-phosphate and beta-D-fructose 6-phosphate from D-ribose 5-phosphate and D-xylulose 5-phosphate (non-oxidative stage): step 2/3. In terms of biological role, transaldolase is important for the balance of metabolites in the pentose-phosphate pathway. The protein is Transaldolase of Vibrio parahaemolyticus serotype O3:K6 (strain RIMD 2210633).